The sequence spans 258 residues: MKNITFIFFILLASPLYANGDRLYRADSRPPDEIKRSGGLMPRGHNEYFDRGTQMNINLYDHARGTQTGFVRYDDGYVSTSLSLRSAHLAGQSILSGYSTYYIYVIATAPNMFNVNDVLGVYSPHPYEQEVSALGGIPYSQIYGWYRVNFGVIDERLHRNREYRDRYYRNLNIAPAEDGYRLAGFPPDHQAWREEPWIHHAPQGCGNSSRTITGDTCNEETQNLSTIYLREYQSKVKRQIFSDYQSEVDIYNRIRDEL.

Residues 1 to 18 form the signal peptide; the sequence is MKNITFIFFILLASPLYA. 25–39 is a binding site for NAD(+); it reads RADSRPPDEIKRSGG. Residue glutamate 130 is part of the active site. An intrachain disulfide couples cysteine 205 to cysteine 217.

This sequence belongs to the enterotoxin A family. Heterohexamer of one A chain and of five B chains.

The biological activity of the toxin is produced by the A chain, which activates intracellular adenyl cyclase. The sequence is that of Heat-labile enterotoxin A chain (eltA) from Escherichia coli.